The following is a 143-amino-acid chain: Transcriptional regulator MraZ (143 aa).

SpoVT-AbrB domains are found at residues 5–47 (EYQH…PMSE) and 76–119 (ATEC…SKEI).

It belongs to the MraZ family. Forms oligomers.

It is found in the cytoplasm. The protein resides in the nucleoid. In Bacillus licheniformis (strain ATCC 14580 / DSM 13 / JCM 2505 / CCUG 7422 / NBRC 12200 / NCIMB 9375 / NCTC 10341 / NRRL NRS-1264 / Gibson 46), this protein is Transcriptional regulator MraZ.